The sequence spans 176 residues: MDKRKRFWMRLSILAVISVALGYTFYSNFFADRSLARAGEQAVNFVLEDLEGESIELRELEGKGVFLNFWGTYCPPCEREMPHMEKLYGEYKEQGVEIIAVNANEPELTVQRFVDRYGLSFPIVIDKGLNVIDAYGIRPLPTTILINEHGEIVKVHTGGMTEQMVEEFMELIKPEA.

The helical; Signal-anchor for type II membrane protein transmembrane segment at 11 to 30 threads the bilayer; the sequence is LSILAVISVALGYTFYSNFF. One can recognise a Thioredoxin domain in the interval 36-176; the sequence is ARAGEQAVNF…EFMELIKPEA (141 aa). Residues Cys-74 and Cys-77 are joined by a disulfide bond.

This sequence belongs to the thioredoxin family. ResA subfamily.

It localises to the cell membrane. The protein operates within protein modification; cytochrome c assembly. Thiol-disulfide oxidoreductase which is required in disulfide reduction during c-type cytochrome synthesis. May accept reducing equivalents from CcdA, leading to breakage of disulfide bonds in apocytochrome c; following this reduction heme can be covalently attached. The protein is Thiol-disulfide oxidoreductase ResA of Halalkalibacterium halodurans (strain ATCC BAA-125 / DSM 18197 / FERM 7344 / JCM 9153 / C-125) (Bacillus halodurans).